A 560-amino-acid chain; its full sequence is Clathrin interactor EPSIN 1 (560 aa).

The 133-residue stretch at 20 to 152 folds into the ENTH domain; it reads LKVLKVPEME…NNKEKISEIR (133 aa). The segment at 190–288 is disordered; sequence NFDSYKDRDS…KPSTGSANQV (99 aa). The segment covering 193–220 has biased composition (basic and acidic residues); that stretch reads SYKDRDSREDKNDYESFQKSRRGVKTEE. The segment covering 221–233 has biased composition (polar residues); sequence QSYTSKKSFSRYG. A compositionally biased stretch (basic and acidic residues) spans 234 to 251; it reads STDHDNLSSGKKSPDSAK. The segment covering 274–287 has biased composition (polar residues); sequence GTSSNKPSTGSANQ. The Clathrin binding signature appears at 296 to 300; sequence IGDFL. The short motif at 320-322 is the ALPHA-ADR binding element; that stretch reads DLF. Polar residues predominate over residues 414 to 439; it reads SHSASVSTGPQAPSVHGSATNTTSPL. 2 disordered regions span residues 414-453 and 517-560; these read SHSA…QKKD and LGKT…GFKQ. Residues 526–536 show a composition bias toward low complexity; sequence QQQQQQQQQQQ. Positions 544–554 are enriched in polar residues; it reads FFSSLSNQRYQ.

Belongs to the epsin family. In terms of assembly, interacts with clathrin, VTI11, GAMMA-ADR and VSR1. Binds to the deubiquitinating enzyme AMSH3. Mostly expressed in cotyledons and flowers, and, to a lower extent, in roots, leaves and siliques (at protein level).

It is found in the golgi apparatus. Its subcellular location is the prevacuolar compartment. The protein resides in the cytoplasm. It localises to the cytoplasmic vesicle. The protein localises to the clathrin-coated vesicle. It is found in the cytoskeleton. Its function is as follows. May have a role in transport via clathrin-coated vesicles from the trans-Golgi network to endosomes. Stimulates clathrin assembly. Does not seem to bind to phospholipids. Plays an important role in the vacuolar trafficking of soluble cargo proteins at the trans-Golgi network. This is Clathrin interactor EPSIN 1 (EPSIN1) from Arabidopsis thaliana (Mouse-ear cress).